We begin with the raw amino-acid sequence, 480 residues long: Proline--tRNA ligase (480 aa).

It belongs to the class-II aminoacyl-tRNA synthetase family. ProS type 3 subfamily. As to quaternary structure, homodimer.

Its subcellular location is the cytoplasm. It carries out the reaction tRNA(Pro) + L-proline + ATP = L-prolyl-tRNA(Pro) + AMP + diphosphate. Its function is as follows. Catalyzes the attachment of proline to tRNA(Pro) in a two-step reaction: proline is first activated by ATP to form Pro-AMP and then transferred to the acceptor end of tRNA(Pro). The sequence is that of Proline--tRNA ligase from Pyrococcus horikoshii (strain ATCC 700860 / DSM 12428 / JCM 9974 / NBRC 100139 / OT-3).